The following is a 215-amino-acid chain: Small ribosomal subunit protein eS1 (215 aa).

Positions 195–215 (SGMQEPQKNEPAPGGEAIAQN) are disordered.

Belongs to the eukaryotic ribosomal protein eS1 family.

The sequence is that of Small ribosomal subunit protein eS1 from Thermoplasma acidophilum (strain ATCC 25905 / DSM 1728 / JCM 9062 / NBRC 15155 / AMRC-C165).